Consider the following 327-residue polypeptide: Biotin synthase (327 aa).

Residues 42-268 (NKVQKASLLS…VMPASTVRLS (227 aa)) enclose the Radical SAM core domain. 3 residues coordinate [4Fe-4S] cluster: C57, C61, and C64. The [2Fe-2S] cluster site is built by C102, C134, C194, and R266.

Belongs to the radical SAM superfamily. Biotin synthase family. In terms of assembly, homodimer. [4Fe-4S] cluster is required as a cofactor. [2Fe-2S] cluster serves as cofactor.

The catalysed reaction is (4R,5S)-dethiobiotin + (sulfur carrier)-SH + 2 reduced [2Fe-2S]-[ferredoxin] + 2 S-adenosyl-L-methionine = (sulfur carrier)-H + biotin + 2 5'-deoxyadenosine + 2 L-methionine + 2 oxidized [2Fe-2S]-[ferredoxin]. It functions in the pathway cofactor biosynthesis; biotin biosynthesis; biotin from 7,8-diaminononanoate: step 2/2. Functionally, catalyzes the conversion of dethiobiotin (DTB) to biotin by the insertion of a sulfur atom into dethiobiotin via a radical-based mechanism. The polypeptide is Biotin synthase (Rhizobium rhizogenes (strain K84 / ATCC BAA-868) (Agrobacterium radiobacter)).